The primary structure comprises 473 residues: FAD-dependent monooxygenase ctvC (473 aa).

FAD-binding residues include Glu37, Ala51, and Arg110. The helical transmembrane segment at 218–238 (IGPGFTFLIFPAAGDSLFWVL) threads the bilayer. Residues Asp310 and Ala323 each coordinate FAD. A glycan (N-linked (GlcNAc...) asparagine) is linked at Asn358. Residues 451–471 (LVYCFGVVILLWISWAVFNVN) traverse the membrane as a helical segment.

The protein belongs to the paxM FAD-dependent monooxygenase family. FAD is required as a cofactor.

The protein localises to the membrane. It participates in mycotoxin biosynthesis. In terms of biological role, FAD-dependent monooxygenase; part of the gene cluster that mediates the biosynthesis of citreoviridin, an inhibitor of the of F1-ATPase beta-subunit. The HR-PKS ctvA accepts acetyl-CoA as the starter unit and catalyzes eight iterations of malonyl-CoA extension and four iterations of SAM-dependent methylation at C4, C12, C14, and C16. The KR and DH domains selectively act on the first six iterations to generate the hexaene chain. In the last three iterations, the KR and DH domains terminate their functions to yield a beta,delta-diketo ester moiety, which then undergoes intramolecular cyclization to yield an alpha-pyrone intermediate. Subsequently, ctvB methylates the alpha-pyrone hydroxyl group to generate citreomontanin. In order to form the tetrahydrofuran ring with the correct stereochemistry, the terminal alkenes of citreomontanin need to undergo isomerization to yield a (17Z)-hexaene, a step that could be catalyzed by ctvC. The (17Z)-hexaene then undergoes bisepoxidation by ctvC to form a (17R,16R,15S,14R)-bisepoxide moiety. Lastly, ctvD acts as a regioselective hydrolase to form the tetrahydrofuran ring with the substituents in the correct absolute configuration, completing the biosynthesis of citreoviridin. This chain is FAD-dependent monooxygenase ctvC, found in Aspergillus terreus (strain NIH 2624 / FGSC A1156).